The following is a 163-amino-acid chain: Nucleotide-binding protein tll0793 (163 aa).

Belongs to the YajQ family.

Its function is as follows. Nucleotide-binding protein. The sequence is that of Nucleotide-binding protein tll0793 from Thermosynechococcus vestitus (strain NIES-2133 / IAM M-273 / BP-1).